A 257-amino-acid chain; its full sequence is NAD-capped RNA hydrolase NudC (257 aa).

Positions 25 and 69 each coordinate substrate. 2 residues coordinate Zn(2+): Cys-98 and Cys-101. Glu-111 contacts substrate. The Zn(2+) site is built by Cys-116 and Cys-119. Tyr-124 lines the substrate pocket. The 124-residue stretch at Pro-125 to Thr-248 folds into the Nudix hydrolase domain. Ala-158, Glu-174, and Glu-178 together coordinate a divalent metal cation. Residues Gly-159–Gly-180 carry the Nudix box motif. Gln-192 to Ser-199 provides a ligand contact to substrate. Position 219 (Glu-219) interacts with a divalent metal cation. A substrate-binding site is contributed by Ala-241.

This sequence belongs to the Nudix hydrolase family. NudC subfamily. In terms of assembly, homodimer. Requires Mg(2+) as cofactor. The cofactor is Mn(2+). Zn(2+) is required as a cofactor.

It catalyses the reaction a 5'-end NAD(+)-phospho-ribonucleoside in mRNA + H2O = a 5'-end phospho-adenosine-phospho-ribonucleoside in mRNA + beta-nicotinamide D-ribonucleotide + 2 H(+). The enzyme catalyses NAD(+) + H2O = beta-nicotinamide D-ribonucleotide + AMP + 2 H(+). It carries out the reaction NADH + H2O = reduced beta-nicotinamide D-ribonucleotide + AMP + 2 H(+). Functionally, mRNA decapping enzyme that specifically removes the nicotinamide adenine dinucleotide (NAD) cap from a subset of mRNAs by hydrolyzing the diphosphate linkage to produce nicotinamide mononucleotide (NMN) and 5' monophosphate mRNA. The NAD-cap is present at the 5'-end of some mRNAs and stabilizes RNA against 5'-processing. Has preference for mRNAs with a 5'-end purine. Catalyzes the hydrolysis of a broad range of dinucleotide pyrophosphates. The protein is NAD-capped RNA hydrolase NudC of Escherichia coli O45:K1 (strain S88 / ExPEC).